Here is a 107-residue protein sequence, read N- to C-terminus: Putative ankyrin repeat protein L14 (107 aa).

ANK repeat units follow at residues 19-48 (DNNY…NIRA), 49-78 (DNDC…NIRA), and 80-107 (NDCA…AVLS).

The polypeptide is Putative ankyrin repeat protein L14 (Acanthamoeba polyphaga (Amoeba)).